A 736-amino-acid chain; its full sequence is Poly(A) polymerase gamma (736 aa).

Lys-2 carries the post-translational modification N6-acetyllysine. Phosphoserine occurs at positions 23 and 29. ATP-binding positions include 99-101 (FGS), Thr-108, 112-114 (DID), Asp-166, Lys-227, Tyr-236, and 245-246 (GV). Mg(2+)-binding residues include Asp-112, Asp-114, and Asp-166. A disordered region spans residues 506-564 (KQSLSDVNRSSGGLQSKRLSLDSSCLDSSRDTDNGTPFNSPASKSDSPSVGETERNSAE). Positions 509–519 (LSDVNRSSGGL) are enriched in polar residues. Low complexity predominate over residues 521–532 (SKRLSLDSSCLD). Ser-525 carries the phosphoserine modification. Residues 539–555 (NGTPFNSPASKSDSPSV) are compositionally biased toward polar residues. 2 positions are modified to phosphoserine: Ser-599 and Ser-648. Position 654 is a phosphothreonine (Thr-654). Over residues 673–685 (DPRTAEERKRKSV) the composition is skewed to basic and acidic residues. Residues 673-720 (DPRTAEERKRKSVDAIGGESMPIPTIDTSRKKRLPSKELPDSSSPVPA) form a disordered region. Residues Ser-684 and Ser-708 each carry the phosphoserine modification.

Belongs to the poly(A) polymerase family. Mg(2+) serves as cofactor. It depends on Mn(2+) as a cofactor. Expressed predominantly in testis, and weakly in other tissues. Overexpressed in several tumors.

It is found in the nucleus. The catalysed reaction is RNA(n) + ATP = RNA(n)-3'-adenine ribonucleotide + diphosphate. Its function is as follows. Responsible for the post-transcriptional adenylation of the 3'-terminal of mRNA precursors and several small RNAs including signal recognition particle (SRP) RNA, nuclear 7SK RNA, U2 small nuclear RNA, and ribosomal 5S RNA. This is Poly(A) polymerase gamma from Homo sapiens (Human).